A 273-amino-acid chain; its full sequence is Octanoyltransferase LipM (273 aa).

One can recognise a BPL/LPL catalytic domain in the interval 33–244; that stretch reads GKTPPTLRFY…AFTRLYAVEF (212 aa). Catalysis depends on Cys146, which acts as the Acyl-thioester intermediate.

It belongs to the octanoyltransferase LipM family. Monomer.

The catalysed reaction is octanoyl-[ACP] + L-lysyl-[protein] = N(6)-octanoyl-L-lysyl-[protein] + holo-[ACP] + H(+). The protein operates within protein modification; protein lipoylation via endogenous pathway; protein N(6)-(lipoyl)lysine from octanoyl-[acyl-carrier-protein]. In terms of biological role, catalyzes the transfer of endogenously produced octanoic acid from octanoyl-acyl-carrier-protein onto the lipoyl domain of GcvH, an intermediate carrier during protein lipoylation. The polypeptide is Octanoyltransferase LipM (Moorella thermoacetica (strain ATCC 39073 / JCM 9320)).